Reading from the N-terminus, the 352-residue chain is Putative histone-lysine N-methyltransferase ASHH4 (352 aa).

The AWS domain occupies 60 to 109 (DHGIFCSCSLDPGSSTLCGSDCNCGILLSSCSSSCKCSSECTNKPFQQRH). Residues 111 to 228 (KKMKLVQTEK…KGEQLTYDYQ (118 aa)) form the SET domain. The Post-SET domain maps to 234-250 (ADQDCYCGAVCCRKKLG).

The protein belongs to the class V-like SAM-binding methyltransferase superfamily. Histone-lysine methyltransferase family. SET2 subfamily.

It localises to the nucleus. It is found in the chromosome. The protein resides in the centromere. The enzyme catalyses L-lysyl-[histone] + S-adenosyl-L-methionine = N(6)-methyl-L-lysyl-[histone] + S-adenosyl-L-homocysteine + H(+). In terms of biological role, histone methyltransferase. The chain is Putative histone-lysine N-methyltransferase ASHH4 (ASHH4) from Arabidopsis thaliana (Mouse-ear cress).